Reading from the N-terminus, the 173-residue chain is Photosystem I assembly protein Ycf3 (173 aa).

3 TPR repeats span residues 35-68 (AFAY…EEDP), 72-105 (SFIL…NPKM), and 120-153 (GQRS…APNN).

The protein belongs to the Ycf3 family.

It localises to the cellular thylakoid membrane. In terms of biological role, essential for the assembly of the photosystem I (PSI) complex. May act as a chaperone-like factor to guide the assembly of the PSI subunits. This is Photosystem I assembly protein Ycf3 from Synechococcus elongatus (strain ATCC 33912 / PCC 7942 / FACHB-805) (Anacystis nidulans R2).